The sequence spans 277 residues: Urease accessory protein UreD (277 aa).

It belongs to the UreD family. UreD, UreF and UreG form a complex that acts as a GTP-hydrolysis-dependent molecular chaperone, activating the urease apoprotein by helping to assemble the nickel containing metallocenter of UreC. The UreE protein probably delivers the nickel.

The protein localises to the cytoplasm. In terms of biological role, required for maturation of urease via the functional incorporation of the urease nickel metallocenter. The chain is Urease accessory protein UreD from Sinorhizobium medicae (strain WSM419) (Ensifer medicae).